A 149-amino-acid chain; its full sequence is Ribonuclease pancreatic (149 aa).

An N-terminal signal peptide occupies residues 1–25 (MGLEKSLMLFPLFVLLLGWVQPSLG). The tract at residues 30-49 (AQKFQRQHMDPAGSSSNSPT) is disordered. Lys-32 and Arg-35 together coordinate substrate. His-37 (proton acceptor) is an active-site residue. 4 disulfides stabilise this stretch: Cys-51–Cys-109, Cys-65–Cys-120, Cys-83–Cys-135, and Cys-90–Cys-97. Residue 66 to 70 (KPVNT) coordinates substrate. An N-linked (GlcNAc...) asparagine glycan is attached at Asn-87. Lys-91 provides a ligand contact to substrate. His-144 functions as the Proton donor in the catalytic mechanism.

It belongs to the pancreatic ribonuclease family. In terms of assembly, monomer. Interacts with and forms tight 1:1 complexes with RNH1. Dimerization of two such complexes may occur. Interaction with RNH1 inhibits this protein. As to expression, pancreas.

The protein localises to the secreted. It catalyses the reaction an [RNA] containing cytidine + H2O = an [RNA]-3'-cytidine-3'-phosphate + a 5'-hydroxy-ribonucleotide-3'-[RNA].. The enzyme catalyses an [RNA] containing uridine + H2O = an [RNA]-3'-uridine-3'-phosphate + a 5'-hydroxy-ribonucleotide-3'-[RNA].. In terms of biological role, endonuclease that catalyzes the cleavage of RNA on the 3' side of pyrimidine nucleotides. Acts on single-stranded and double-stranded RNA. In Mus saxicola (Brown spiny mouse), this protein is Ribonuclease pancreatic (Rnase1).